A 480-amino-acid chain; its full sequence is Ochratoxinase (480 aa).

Positions 111, 113, 246, 287, and 307 each coordinate Zn(2+). Residue lysine 246 is part of the active site. Residue aspartate 378 is part of the active site.

Belongs to the metallo-dependent hydrolases superfamily. Ochratoxinase amidase 2 family. As to quaternary structure, homooctamer. The cofactor is Zn(2+).

It is found in the secreted. It catalyses the reaction ochratoxin A + H2O = ochratoxin alpha + L-phenylalanine. Its activity is regulated as follows. The Zn(2+)-specific chelator 1,10-phenanthroline inhibits the enzyme activity. In terms of biological role, carboxypeptidase that catalyzes the release of a C-terminal amino acid with specific catalytic activity for aromatic amino acids such as phenylalanine. Is able to degrade ochratoxin A, one of the five major mycotoxins most harmful to humans and animals that is produced by Aspergillus and Penicillium species and occurs in a wide range of agricultural products. This is Ochratoxinase from Aspergillus niger (strain ATCC 1015 / CBS 113.46 / FGSC A1144 / LSHB Ac4 / NCTC 3858a / NRRL 328 / USDA 3528.7).